We begin with the raw amino-acid sequence, 330 residues long: MKIDVHHHFYPQAFREALEAAGGDPSGWYIPPWTLELDQEINATLNVTTTILSVTAPGPVIAKDPAAAASLARECNRSAAAIRDAAPAQYGFFASVPSLFDTALALEEIRYALDELHADGVTLFTRYGQGANYLGHEAFAPIWAELSRRQAVVFIHPTHPQDTALINRALPQPMFDYPHETGRTAMDLLTSGRLRQHRGCRVILSHAGGTLPYLIHRAATMLPCMPPDRNIGLSRDEILDTAREVFYFDTAISANEVTLSALARFAKPGHILFGSDFPNAPRDAIVRFTRFVEEEAAALPDGVTVEALKENALQLFPRLKRAEANGVPKI.

Residues His-6, His-8, His-156, and Asp-276 each coordinate Zn(2+).

Belongs to the metallo-dependent hydrolases superfamily. ACMSD family. Monomer.

It is found in the cytoplasm. Its subcellular location is the cytosol. The catalysed reaction is 6-methylsalicylate + H(+) = 3-methylphenol + CO2. Its pathway is secondary metabolite biosynthesis. In terms of biological role, 6-methylsalicylic acid decarboxylase; part of the gene cluster that mediates the biosynthesis of aculins. The pathway begins with the synthesis of 6-methylsalicylic acid by the polyketide synthase (PKS) acuA via condensation of acetate and malonate units. The 6-methylsalicylic acid decarboxylase acuB then catalyzes the decarboxylation of 6-methylsalicylic acid to yield m-cresol (also known as 3-methylphenol). These first reactions occur in the cytosol. The intermediate m-cresol is then transported into the endoplasmic reticulum where the cytochrome P450 monooxygenase acuC converts it to m-hydroxybenzyl alcohol, which is further converted to gentisyl alcohol by the cytochrome P450 monooxygenase acuD. Gentisyl alcohol is further oxidized by the oxidoreductase acuE that probably catalyzes hydroxylation of the aromatic ring. The aromatic system might then be opened by oxidation through a Baeyer-Villiger type of oxidation, which could be catalyzed by acuF, with the carboxylic acid at C-1 subsequently reduced to an aldehyde by acuG. Subsequently, a hemiacetal is formed, before the dehydrogenase acuH would reduce the double bond between C-4 and C-6. Finally, keto-enol tautomerism results in formation of aculinic acid, which exists as two diastereomers (both R/S configurations at C-1) by non-enzymatic hemiacetal formation. The carboxypeptidase acuI could be involved in the linking of aculinic acid to an aculene A moiety produced by the aculene biosynthesis cluster and which leads to the production of aculin A. AcuI may also be involved in the attachment of proline to aculinic acid to form epi-aculins A and B. The sequence is that of 6-methylsalicylic acid decarboxylase acuB from Aspergillus aculeatus (strain ATCC 16872 / CBS 172.66 / WB 5094).